Here is a 225-residue protein sequence, read N- to C-terminus: UPF0758 protein BAMEG_4721 (225 aa).

The 123-residue stretch at 103–225 (SIRSPEDCAT…FVSLKEKGHI (123 aa)) folds into the MPN domain. His-174, His-176, and Asp-187 together coordinate Zn(2+). The short motif at 174-187 (HNHPSGDPAPSRED) is the JAMM motif element.

The protein belongs to the UPF0758 family.

The polypeptide is UPF0758 protein BAMEG_4721 (Bacillus anthracis (strain CDC 684 / NRRL 3495)).